A 155-amino-acid polypeptide reads, in one-letter code: dCTP deaminase (155 aa).

DCTP is bound by residues 79-84 (RSSLAR), aspartate 95, glutamine 124, and tyrosine 138.

The protein belongs to the dCTP deaminase family. As to quaternary structure, homotrimer.

It catalyses the reaction dCTP + H2O + H(+) = dUTP + NH4(+). It functions in the pathway pyrimidine metabolism; dUMP biosynthesis; dUMP from dCTP (dUTP route): step 1/2. Its function is as follows. Catalyzes the deamination of dCTP to dUTP. The sequence is that of dCTP deaminase from Thermococcus kodakarensis (strain ATCC BAA-918 / JCM 12380 / KOD1) (Pyrococcus kodakaraensis (strain KOD1)).